A 1647-amino-acid polypeptide reads, in one-letter code: Cortactin-binding protein 2 (1647 aa).

Disordered regions lie at residues 1 to 27 (MATD…AEAA), 202 to 222 (EKKK…RSTE), 318 to 427 (HVKK…QPGL), 440 to 468 (GNAN…RDNL), and 482 to 604 (LSRF…PSID). Residues 120–276 (KMQERMATQL…EQLKRGSDSK (157 aa)) adopt a coiled-coil conformation. The span at 362–372 (SSAPSLPPASA) shows a compositional bias: low complexity. Over residues 379-388 (GPSTGSTADL) the composition is skewed to polar residues. Positions 389-411 (PSSTAPAPGSAAQSPVAAALGPA) are enriched in low complexity. Positions 440 to 466 (GNANDPDQNGNTTQSPPSRDVSPTSRD) are enriched in polar residues. At Arg484 the chain carries Asymmetric dimethylarginine. The segment covering 488-509 (PAVGAAPRPGAPPTGDAGAYPP) has biased composition (low complexity). Polar residues predominate over residues 569–579 (TVASPPSSLPQ). 5 ANK repeats span residues 695–725 (GRPT…DINY), 729–758 (DGHS…QVNA), 762–791 (NGFT…NINH), 795–824 (GGQT…DRSV), and 828–857 (DGWT…PAHG). The disordered stretch occupies residues 856–886 (HGNSLNEEEPESDVSDLDDGEESSEGESKPV). Over residues 861-880 (NEEEPESDVSDLDDGEESSE) the composition is skewed to acidic residues. The ANK 6 repeat unit spans residues 898 to 928 (EGWTAAHIAASKGFKNCLEILCRHRGLEPER). The disordered stretch occupies residues 1436–1467 (ENGAWRKVNTSPRRKSGRFSSPTWNKPDLSNE). A Phosphoserine modification is found at Ser1509. The disordered stretch occupies residues 1542 to 1647 (RTFDSSGNNP…HKNEQTHRKT (106 aa)). Composition is skewed to polar residues over residues 1544-1559 (FDSS…TVNN) and 1567-1584 (KEVS…SNNK). The segment covering 1609 to 1623 (SQNTKRSSSSSNTRQ) has biased composition (low complexity). Basic and acidic residues predominate over residues 1630-1647 (SKEENWNLHKNEQTHRKT).

Interacts with CTTN/cortactin SH3 domain. Interacts with STRN, STRN4/zinedin and MOB4/phocein; this interactions mediate the association with the STRIPAK core complex and may regulate dendritic spine distribution of the STRIPAK complex in hippocampal neurons. Activation of glutamate receptors weakens the interaction with STRN and STRN4.

It is found in the cytoplasm. The protein resides in the cell cortex. Its subcellular location is the cell projection. The protein localises to the dendritic spine. Its function is as follows. Regulates the dendritic spine distribution of CTTN/cortactin in hippocampal neurons, and thus controls dendritic spinogenesis and dendritic spine maintenance. Associates with the striatin-interacting phosphatase and kinase (STRIPAK) core complex to regulate dendritic spine distribution of the STRIPAK complex in hippocampal neurons. The sequence is that of Cortactin-binding protein 2 (CTTNBP2) from Microcebus murinus (Gray mouse lemur).